A 380-amino-acid polypeptide reads, in one-letter code: Cytochrome b (380 aa).

4 helical membrane passes run phenylalanine 34–methionine 54, tryptophan 78–isoleucine 99, tryptophan 114–leucine 134, and phenylalanine 179–threonine 199. Residues histidine 84 and histidine 98 each coordinate heme b. Residues histidine 183 and histidine 197 each coordinate heme b. Histidine 202 serves as a coordination point for a ubiquinone. 4 helical membrane passes run leucine 227 to serine 247, leucine 289 to histidine 309, leucine 321 to serine 341, and phenylalanine 348 to proline 368.

The protein belongs to the cytochrome b family. The cytochrome bc1 complex contains 11 subunits: 3 respiratory subunits (MT-CYB, CYC1 and UQCRFS1), 2 core proteins (UQCRC1 and UQCRC2) and 6 low-molecular weight proteins (UQCRH/QCR6, UQCRB/QCR7, UQCRQ/QCR8, UQCR10/QCR9, UQCR11/QCR10 and a cleavage product of UQCRFS1). This cytochrome bc1 complex then forms a dimer. Heme b serves as cofactor.

It is found in the mitochondrion inner membrane. Functionally, component of the ubiquinol-cytochrome c reductase complex (complex III or cytochrome b-c1 complex) that is part of the mitochondrial respiratory chain. The b-c1 complex mediates electron transfer from ubiquinol to cytochrome c. Contributes to the generation of a proton gradient across the mitochondrial membrane that is then used for ATP synthesis. This is Cytochrome b (MT-CYB) from Oceanodroma melania (Black storm-petrel).